A 314-amino-acid polypeptide reads, in one-letter code: Cytochrome bo(3) ubiquinol oxidase subunit 2 (314 aa).

A signal peptide spans 1–23; the sequence is MSKKRYPRLFGILPFLGMLLLSG. Cys24 carries the N-palmitoyl cysteine lipid modification. The S-diacylglycerol cysteine moiety is linked to residue Cys24. Over 24–42 the chain is Periplasmic; it reads CNWTLLDPKGQVGIEQKNL. The helical transmembrane segment at 43–63 threads the bilayer; that stretch reads ILIATGLMLLVVIPVIIMTVV. Residues 64–86 are Cytoplasmic-facing; sequence FAWKYRASNKAATYTPDWSHSTK. The helical transmembrane segment at 87-107 threads the bilayer; sequence IEAAVWIIPILIIIALGYFTY. At 108-314 the chain is on the periplasmic side; it reads HSTHKLDPYR…SMQPAAGAEE (207 aa). Positions 278-293 are enriched in basic and acidic residues; that stretch reads YEGMNRGRPSHEEAGS. The tract at residues 278–314 is disordered; it reads YEGMNRGRPSHEEAGSKDLATTKGVESSMQPAAGAEE.

This sequence belongs to the cytochrome c oxidase subunit 2 family. As to quaternary structure, heterooctamer of two A chains, two B chains, two C chains and two D chains.

The protein resides in the cell inner membrane. Its function is as follows. Cytochrome bo(3) ubiquinol terminal oxidase is the component of the aerobic respiratory chain of E.coli that predominates when cells are grown at high aeration. Has proton pump activity across the membrane in addition to electron transfer, pumping 2 protons/electron. This is Cytochrome bo(3) ubiquinol oxidase subunit 2 (cyoA) from Pseudomonas putida (Arthrobacter siderocapsulatus).